A 75-amino-acid polypeptide reads, in one-letter code: 8.9 kDa basic protein (75 aa).

This is 8.9 kDa basic protein (P8.9) from Orgyia pseudotsugata (Douglas-fir tussock moth).